Reading from the N-terminus, the 334-residue chain is D-fructose 1,6-bisphosphatase class 2/sedoheptulose 1,7-bisphosphatase (334 aa).

Residues aspartate 33, glutamate 57, aspartate 85, and glutamate 88 each coordinate Mn(2+). Residues 88 to 90, tyrosine 119, 164 to 166, and 186 to 188 each bind substrate; these read EGT, RAR, and DGD. Glutamate 213 provides a ligand contact to Mn(2+).

Belongs to the FBPase class 2 family. In terms of assembly, homotetramer. Mn(2+) is required as a cofactor.

The enzyme catalyses beta-D-fructose 1,6-bisphosphate + H2O = beta-D-fructose 6-phosphate + phosphate. It catalyses the reaction D-sedoheptulose 1,7-bisphosphate + H2O = D-sedoheptulose 7-phosphate + phosphate. The protein operates within carbohydrate biosynthesis; Calvin cycle. In terms of biological role, catalyzes the hydrolysis of fructose 1,6-bisphosphate (Fru 1,6-P2) and sedoheptulose 1,7-bisphosphate (Sed 1,7-P2) to fructose 6-phosphate and sedoheptulose 7-phosphate, respectively. The polypeptide is D-fructose 1,6-bisphosphatase class 2/sedoheptulose 1,7-bisphosphatase (Prochlorococcus marinus (strain NATL1A)).